Reading from the N-terminus, the 219-residue chain is Uracil-DNA glycosylase (219 aa).

The active-site Proton acceptor is D63.

This sequence belongs to the uracil-DNA glycosylase (UDG) superfamily. UNG family.

It localises to the cytoplasm. The catalysed reaction is Hydrolyzes single-stranded DNA or mismatched double-stranded DNA and polynucleotides, releasing free uracil.. Functionally, excises uracil residues from the DNA which can arise as a result of misincorporation of dUMP residues by DNA polymerase or due to deamination of cytosine. The sequence is that of Uracil-DNA glycosylase from Mesomycoplasma hyopneumoniae (strain 7448) (Mycoplasma hyopneumoniae).